A 178-amino-acid chain; its full sequence is PRA1 family protein 2 (178 aa).

Topologically, residues 1-41 (MSEVRLPPLRALDDFVLGSARLAAPDPCDPQRWCHRVINNL) are cytoplasmic. Residues 42 to 62 (LYYQTNYLLCFGIGLALAGYV) form a helical membrane-spanning segment. Residues 63–64 (RP) lie on the Extracellular side of the membrane. Residues 65–85 (LHTLLSALVVAVALGMLVWAA) form a helical membrane-spanning segment. The Cytoplasmic segment spans residues 86–96 (ETRAAVRRCRR). A helical transmembrane segment spans residues 97 to 119 (SHPAACLAAVLAVGLLVLWVVGG). Residues 120–122 (ACT) are Extracellular-facing. The helical transmembrane segment at 123–140 (FLLSIAGPVLLILVHASL) threads the bilayer. Over 141-178 (RLRNLKNKIENKIESIGLKRTPMGLLLEALGQEQEAGS) the chain is Cytoplasmic.

Belongs to the PRA1 family. In terms of assembly, interacts with CCR5 and GDE1.

The protein localises to the endosome membrane. May be involved in ER/Golgi transport and vesicular traffic. Plays a proapoptotic role in cerulenin-induced neuroblastoma apoptosis. In Macaca fascicularis (Crab-eating macaque), this protein is PRA1 family protein 2 (PRAF2).